A 169-amino-acid polypeptide reads, in one-letter code: Ribosome maturation factor RimM (169 aa).

The region spanning 94–167 is the PRC barrel domain; the sequence is ENEFYFHEII…KITIEVMEGL (74 aa).

The protein belongs to the RimM family. In terms of assembly, binds ribosomal protein uS19.

The protein localises to the cytoplasm. In terms of biological role, an accessory protein needed during the final step in the assembly of 30S ribosomal subunit, possibly for assembly of the head region. Essential for efficient processing of 16S rRNA. May be needed both before and after RbfA during the maturation of 16S rRNA. It has affinity for free ribosomal 30S subunits but not for 70S ribosomes. This Listeria welshimeri serovar 6b (strain ATCC 35897 / DSM 20650 / CCUG 15529 / CIP 8149 / NCTC 11857 / SLCC 5334 / V8) protein is Ribosome maturation factor RimM.